A 307-amino-acid chain; its full sequence is MKSQWHGTCDLRLFKSSSSNNKDIVKTIHQAKSTAPLKVMRVFNDKKDGRCEIPILHSAGGIVGGDQLTINVNAEEDSIAICSSVAAQKVYGSRGRSKLNPQGSWANQKCFFQIKQNSDFEWMPQELIVYQGGLFEQNMTVNLDPSSSFLCVDLVRLGRTAAEEQLGSGVWRSSLEIFRDNNQGKHYEFSDRLELSGEALKSIHGLEQKPVFGSLTWITPKKIMQKDLSDLLVECRQQRAGLEGFMTCSLLENGISARYTGSSTQSARFWFYRIWSLTRVLRKLSMPEYMRIWPMQENPSRDIKCPL.

Belongs to the UreD family. In terms of assembly, ureD, UreF and UreG form a complex that acts as a GTP-hydrolysis-dependent molecular chaperone, activating the urease apoprotein by helping to assemble the nickel containing metallocenter of UreC. The UreE protein probably delivers the nickel.

The protein resides in the cytoplasm. In terms of biological role, required for maturation of urease via the functional incorporation of the urease nickel metallocenter. The polypeptide is Urease accessory protein UreD (Prochlorococcus marinus (strain NATL2A)).